The following is a 61-amino-acid chain: Large ribosomal subunit protein bL32 (61 aa).

It belongs to the bacterial ribosomal protein bL32 family.

The sequence is that of Large ribosomal subunit protein bL32 from Acidithiobacillus ferrooxidans (strain ATCC 23270 / DSM 14882 / CIP 104768 / NCIMB 8455) (Ferrobacillus ferrooxidans (strain ATCC 23270)).